Reading from the N-terminus, the 232-residue chain is (S)-2-haloacid dehalogenase (232 aa).

The Nucleophile role is filled by aspartate 10. Residues 11–12 (LY), arginine 41, and 118–119 (SN) each bind an (S)-2-haloacid. Residues 175-180 (SSNAWD) are important for catalytic activity.

Belongs to the HAD-like hydrolase superfamily. S-2-haloalkanoic acid dehalogenase family. Homodimer.

It carries out the reaction an (S)-2-haloacid + H2O = a (2R)-2-hydroxycarboxylate + a halide anion + H(+). The catalysed reaction is (S)-2-chloropropanoate + H2O = (R)-lactate + chloride + H(+). Its function is as follows. Catalyzes the hydrolytic dehalogenation of small (S)-2-haloalkanoic acids to yield the corresponding (R)-2-hydroxyalkanoic acids. Acts on acids of short chain lengths, C(2) to C(4), with inversion of configuration at C-2. Active with 2-halogenated carboxylic acids and converts only the S-isomer (or L-isomer) of 2-chloropropionic acid with inversion of configuration to produce R-lactate (or D-isomer). This is (S)-2-haloacid dehalogenase from Pseudomonas sp. (strain YL).